Here is a 581-residue protein sequence, read N- to C-terminus: MKSIILFVLSLLLILEKQAAVMGQKGGSKGQSPSGSSQFPHGQKGQHYFGQKDQQHTKSKGSFSIQHTYHVDVNDHDRTRESQQYDLNALHKTRKSKQHLGGSQELLNYKQEGRDHDKSKGHFHMIVIHHKGGKAHRGTQNPSQDQGNSPSGRGISSQYSNTEKRLWVHGLSKEQASASGAQKGRTQGRSQSSYVLQTEELVANKQRETQNSHQNKGHYQNVVEVREKHSSKLQTSLRPAYQDRLQHGPKDIFTTQGELLVYDKNQHQTKNLNQDQEHGRKAHKISYQSSHTEERQLNHGEKSVQKDISKGRISIQTEEKIHGKSQNQVTIHSQDQEHGHKENKMSYQSSSTEERHLNCGEKGIQKSVSKGSISIQTEEQIHGKSQNQVRIPSQAQEYGHKENKISYQSSSTEERRLNSGEKDIQKGVSKGSISIQTEEKIHGKSQDQVTIPSQDQEHGHKENKMSYQSSSTEERRLNYGGKNTQKDVSQSSISFQTEKLVEGKSQIQTPNPNQDQWSGQNAKGKSGQSADREQDLLSHEQKGRYQQESSAARNIVITEHEVARDDHLTQQYNEDRNPIST.

An N-terminal signal peptide occupies residues M1–G23. Disordered stretches follow at residues Q24–S62, G132–S157, K173–Y194, and N271–T581. Polar residues-rich tracts occupy residues G138–S157 and E174–Y194. A compositionally biased stretch (basic and acidic residues) spans H291–K310. Polar residues predominate over residues K324–S333. Residues Q334 to K344 show a composition bias toward basic and acidic residues. The span at K366 to Q396 shows a compositional bias: polar residues. Basic and acidic residues-rich tracts occupy residues T412–Q425 and D455–K464. Polar residues-rich tracts occupy residues G481 to T497 and S505 to S529. Composition is skewed to basic and acidic residues over residues A530–Y545 and T558–T581.

It belongs to the semenogelin family. As to quaternary structure, interacts with SERPINA5.

It localises to the secreted. Participates in the formation of a gel matrix (sperm coagulum) entrapping the accessory gland secretions and ejaculated spermatozoa. This is Semenogelin-2 (SEMG2) from Pongo abelii (Sumatran orangutan).